A 346-amino-acid polypeptide reads, in one-letter code: Protease inhibitor Egf1.5b (346 aa).

A signal peptide spans 1 to 28 (MYIDTGIMSNNIFLFAFFALVGLTRIEA). The TIL domain maps to 52 to 104 (CRENEHYNSTRIECEDECNDRNNKLCYRFQQFCWCNEGYIRNSSHICVKLEDC).

It belongs to the polydnaviridae EGF-like motif protein family. As to quaternary structure, interacts with host PAP1, PAP3 and SPH2.

Counteracts the host humoral immune response by inhibiting the processing and the amidolytic activity of host PAP1 and PAP3. Thereby, melanization of host hemolymph, normally producing several reactive intermediates toxic for viruses, is deregulated and proper immune response cannot occur. The sequence is that of Protease inhibitor Egf1.5b (O5) from Microplitis demolitor (Parasitoid wasp).